A 183-amino-acid chain; its full sequence is Oligoribonuclease (183 aa).

An Exonuclease domain is found at 10–173 (LIWIDLEMTG…ADIRESIAEL (164 aa)). Tyr131 is an active-site residue.

This sequence belongs to the oligoribonuclease family.

The protein localises to the cytoplasm. In terms of biological role, 3'-to-5' exoribonuclease specific for small oligoribonucleotides. The sequence is that of Oligoribonuclease from Idiomarina loihiensis (strain ATCC BAA-735 / DSM 15497 / L2-TR).